Consider the following 224-residue polypeptide: Uridylate kinase (224 aa).

ATP is bound at residue 8–12 (KITGK). G43 serves as a coordination point for UMP. Residues G44 and R48 each contribute to the ATP site. UMP is bound by residues D66 and 114–120 (LIPGQST). Positions 140, 146, and 149 each coordinate ATP.

This sequence belongs to the UMP kinase family. Homohexamer.

The protein localises to the cytoplasm. The enzyme catalyses UMP + ATP = UDP + ADP. Its pathway is pyrimidine metabolism; CTP biosynthesis via de novo pathway; UDP from UMP (UMPK route): step 1/1. Inhibited by UTP. Catalyzes the reversible phosphorylation of UMP to UDP. This Staphylothermus marinus (strain ATCC 43588 / DSM 3639 / JCM 9404 / F1) protein is Uridylate kinase.